Here is an 816-residue protein sequence, read N- to C-terminus: Sucrose synthase 1 (816 aa).

The GT-B glycosyltransferase stretch occupies residues 280 to 757 (MVFNVVIMSP…GLQRIEEKYT (478 aa)).

This sequence belongs to the glycosyltransferase 1 family. Plant sucrose synthase subfamily. Homotetramer or heterotetramer with SUS2. Expressed in root phloem and leaf mesophyll. Expressed in phloem tissues and aleurone layers of seeds and at lower levels in the pericarp and endosperm cells (at protein level). Predominantly expressed in elongating tissues including roots, developing leaves and internodes.

It catalyses the reaction an NDP-alpha-D-glucose + D-fructose = a ribonucleoside 5'-diphosphate + sucrose + H(+). In terms of biological role, sucrose-cleaving enzyme that provides UDP-glucose and fructose for various metabolic pathways. This chain is Sucrose synthase 1 (SUS1), found in Oryza sativa subsp. japonica (Rice).